Here is a 547-residue protein sequence, read N- to C-terminus: Chaperonin GroEL (547 aa).

Residues 30-33 (TLGP), Lys-51, 87-91 (DGTTT), Gly-415, and Asp-495 contribute to the ATP site. The tract at residues 526–547 (QDATPTASPDMGGMGGMGGGMM) is disordered. Residues 537–547 (GGMGGMGGGMM) show a composition bias toward gly residues.

It belongs to the chaperonin (HSP60) family. In terms of assembly, forms a cylinder of 14 subunits composed of two heptameric rings stacked back-to-back. Interacts with the co-chaperonin GroES.

It is found in the cytoplasm. It carries out the reaction ATP + H2O + a folded polypeptide = ADP + phosphate + an unfolded polypeptide.. In terms of biological role, together with its co-chaperonin GroES, plays an essential role in assisting protein folding. The GroEL-GroES system forms a nano-cage that allows encapsulation of the non-native substrate proteins and provides a physical environment optimized to promote and accelerate protein folding. This chain is Chaperonin GroEL, found in Vesicomyosocius okutanii subsp. Calyptogena okutanii (strain HA).